The chain runs to 182 residues: Bis(5'-nucleosyl)-tetraphosphatase [asymmetrical] (182 aa).

Positions 3-110 (KQLYFSKFPV…IPRKKADFSE (108 aa)) constitute an HIT domain. Substrate-binding positions include N28, Q84, and 90-93 (GQTV). Residues 95-99 (HVHVH) carry the Histidine triad motif motif. The Tele-AMP-histidine intermediate role is filled by H97. H99 lines the substrate pocket. Residues 135–161 (RYAGDERPPTSMRQAIPKDEDRKPRTL) are disordered. Over residues 150–161 (IPKDEDRKPRTL) the composition is skewed to basic and acidic residues.

The enzyme catalyses P(1),P(4)-bis(5'-guanosyl) tetraphosphate + H2O = GMP + GTP + 2 H(+). Functionally, asymmetrically hydrolyzes Ap4A to yield AMP and ATP. In Schizosaccharomyces pombe (strain 972 / ATCC 24843) (Fission yeast), this protein is Bis(5'-nucleosyl)-tetraphosphatase [asymmetrical] (aph1).